Reading from the N-terminus, the 176-residue chain is Small ribosomal subunit protein uS5 (176 aa).

An S5 DRBM domain is found at 15-78 (FEERIVEIRR…SAARRNVFEV (64 aa)).

It belongs to the universal ribosomal protein uS5 family. Part of the 30S ribosomal subunit. Contacts proteins S4 and S8.

Its function is as follows. With S4 and S12 plays an important role in translational accuracy. Functionally, located at the back of the 30S subunit body where it stabilizes the conformation of the head with respect to the body. This chain is Small ribosomal subunit protein uS5, found in Thermosipho africanus (strain TCF52B).